Consider the following 97-residue polypeptide: Putative CC-type chemokine U83 (97 aa).

2 cysteine pairs are disulfide-bonded: cysteine 32–cysteine 62 and cysteine 33–cysteine 76.

This sequence belongs to the intercrine beta (chemokine CC) family. Highly divergent.

This Human herpesvirus 6A (strain Uganda-1102) (HHV-6 variant A) protein is Putative CC-type chemokine U83 (U83).